A 395-amino-acid polypeptide reads, in one-letter code: Zinc finger protein 385D (395 aa).

The segment at 80 to 110 (ISCNICQLRFNSDSQAAAHYKGTKHAKKLKA) adopts a Matrin-type 1 zinc-finger fold. Positions 169–193 (MTTEITSKVEKSPTTATGNSSCPST) are enriched in polar residues. Residues 169 to 194 (MTTEITSKVEKSPTTATGNSSCPSTE) are disordered. 2 consecutive Matrin-type zinc fingers follow at residues 204–234 (LYCS…MLEA) and 267–297 (FHCE…RAAG). The interval 282 to 309 (LKQHISSRRHKDRAAGKPPKPKYSPYNK) is disordered.

The protein resides in the nucleus. This is Zinc finger protein 385D (ZNF385D) from Homo sapiens (Human).